The chain runs to 125 residues: UPF0231 protein in hemN 3'region (125 aa).

The protein belongs to the UPF0231 family.

The protein is UPF0231 protein in hemN 3'region of Mannheimia haemolytica (Pasteurella haemolytica).